A 174-amino-acid polypeptide reads, in one-letter code: Cuticle protein 1 (174 aa).

An N-terminal signal peptide occupies residues 1–18 (MRFLIAFVAILGYASASA).

It is found in the secreted. This Lonomia obliqua (Moth) protein is Cuticle protein 1.